The following is a 358-amino-acid chain: Nuclear receptor subfamily 1 group I member 3 (358 aa).

Positions proline 18 to serine 93 form a DNA-binding region, nuclear receptor. Residues cysteine 21–cysteine 41 form an NR C4-type zinc finger. At threonine 48 the chain carries Phosphothreonine; by PKC. The NR C4-type zinc-finger motif lies at cysteine 57–cysteine 81. Residues glutamine 119–serine 358 enclose the NR LBD domain.

This sequence belongs to the nuclear hormone receptor family. NR1 subfamily. In terms of assembly, heterodimer of NR1I3 and RXR. Interacts with PSMC4. Interacts with ECT2. Directly interacts with DNAJC7; this complex may also include HSP90. Interacts with CRY1. Interacts with CRY2 in a ligand-dependent manner. Post-translationally, phosphorylated at Thr-48 by PKC, dephosphorylation of Thr-48 is required for nuclear translocation and activation. Predominantly expressed in liver.

It is found in the nucleus. The protein resides in the cytoplasm. It localises to the cytoskeleton. In terms of biological role, binds and transactivates the retinoic acid response elements that control expression of the retinoic acid receptor beta 2 and alcohol dehydrogenase 3 genes. Transactivates both the phenobarbital responsive element module of the human CYP2B6 gene and the CYP3A4 xenobiotic response element. The polypeptide is Nuclear receptor subfamily 1 group I member 3 (Nr1i3) (Mus musculus (Mouse)).